The primary structure comprises 482 residues: Cysteine--tRNA ligase (482 aa).

Position 29 (C29) interacts with Zn(2+). The 'HIGH' region motif lies at 31-41; the sequence is PTVYDSAHVGH. 3 residues coordinate Zn(2+): C210, H235, and E239. The 'KMSKS' region signature appears at 272-276; the sequence is KMSKS. Residue K275 participates in ATP binding.

The protein belongs to the class-I aminoacyl-tRNA synthetase family. Monomer. Zn(2+) serves as cofactor.

It is found in the cytoplasm. It catalyses the reaction tRNA(Cys) + L-cysteine + ATP = L-cysteinyl-tRNA(Cys) + AMP + diphosphate. The protein is Cysteine--tRNA ligase of Anaeromyxobacter sp. (strain Fw109-5).